The following is a 254-amino-acid chain: C-X-C motif chemokine 16 (254 aa).

Residues 1-29 (MGRDLRPGSRVLLLLLLLLLVYLTQPGNG) form the signal peptide. Topologically, residues 30-205 (NEGSVTGSCY…AGPTARTSAT (176 aa)) are extracellular. The segment at 32–107 (GSVTGSCYCG…DLKECGHAYS (76 aa)) is chemokine. Disulfide bonds link Cys-38-Cys-68 and Cys-40-Cys-82. Residues 146 to 165 (QSTQRPTLPVGSLSSDKELT) form a disordered region. An N-linked (GlcNAc...) asparagine glycan is attached at Asn-168. The tract at residues 178 to 200 (SLAAGPEAGENQKQPEKNAGPTA) is disordered. A helical transmembrane segment spans residues 206-226 (VPVLCLLAIIFILTAALSYVL). The Cytoplasmic portion of the chain corresponds to 227-254 (CKRRRGQSPQSSPDLPVHYIPVAPDSNT). The tract at residues 231 to 254 (RGQSPQSSPDLPVHYIPVAPDSNT) is disordered.

It belongs to the intercrine alpha (chemokine CxC) family. Glycosylated. Expressed in T-cell areas. Expressed in spleen, lymph nodes, lung, kidney, small intestine and thymus. Weak expression in heart and liver and no expression in brain and bone marrow.

The protein resides in the cell membrane. The protein localises to the secreted. Acts as a scavenger receptor on macrophages, which specifically binds to OxLDL (oxidized low density lipoprotein), suggesting that it may be involved in pathophysiology such as atherogenesis. Induces a strong chemotactic response. Induces calcium mobilization. Binds to CXCR6/Bonzo. The polypeptide is C-X-C motif chemokine 16 (CXCL16) (Homo sapiens (Human)).